The chain runs to 664 residues: UvrABC system protein B (664 aa).

In terms of domain architecture, Helicase ATP-binding spans 25 to 182; sequence KSFGEGKNKI…RKFLHIQYAR (158 aa). ATP is bound at residue 38–45; sequence GVTGSGKT. A Beta-hairpin motif is present at residues 91–114; sequence YYDYYQPEAYVPSSDTFIEKDMSM. Residues 429 to 595 form the Helicase C-terminal domain; it reads QIEDLLNEIR…TIQKEIHDIL (167 aa). Residues 625 to 660 enclose the UVR domain; the sequence is DKLREALKREMLRYANDMDFEKAAMFRDKMLALGPD.

This sequence belongs to the UvrB family. As to quaternary structure, forms a heterotetramer with UvrA during the search for lesions. Interacts with UvrC in an incision complex.

It localises to the cytoplasm. Its function is as follows. The UvrABC repair system catalyzes the recognition and processing of DNA lesions. A damage recognition complex composed of 2 UvrA and 2 UvrB subunits scans DNA for abnormalities. Upon binding of the UvrA(2)B(2) complex to a putative damaged site, the DNA wraps around one UvrB monomer. DNA wrap is dependent on ATP binding by UvrB and probably causes local melting of the DNA helix, facilitating insertion of UvrB beta-hairpin between the DNA strands. Then UvrB probes one DNA strand for the presence of a lesion. If a lesion is found the UvrA subunits dissociate and the UvrB-DNA preincision complex is formed. This complex is subsequently bound by UvrC and the second UvrB is released. If no lesion is found, the DNA wraps around the other UvrB subunit that will check the other stand for damage. This is UvrABC system protein B from Leptospira biflexa serovar Patoc (strain Patoc 1 / Ames).